A 654-amino-acid chain; its full sequence is 4-hydroxy-3-methylbut-2-en-1-yl diphosphate synthase (flavodoxin) (654 aa).

The [4Fe-4S] cluster site is built by C557, C560, C591, and E598.

The protein belongs to the IspG family. Requires [4Fe-4S] cluster as cofactor.

The catalysed reaction is (2E)-4-hydroxy-3-methylbut-2-enyl diphosphate + oxidized [flavodoxin] + H2O + 2 H(+) = 2-C-methyl-D-erythritol 2,4-cyclic diphosphate + reduced [flavodoxin]. It participates in isoprenoid biosynthesis; isopentenyl diphosphate biosynthesis via DXP pathway; isopentenyl diphosphate from 1-deoxy-D-xylulose 5-phosphate: step 5/6. Its function is as follows. Converts 2C-methyl-D-erythritol 2,4-cyclodiphosphate (ME-2,4cPP) into 1-hydroxy-2-methyl-2-(E)-butenyl 4-diphosphate. The protein is 4-hydroxy-3-methylbut-2-en-1-yl diphosphate synthase (flavodoxin) of Protochlamydia amoebophila (strain UWE25).